A 402-amino-acid polypeptide reads, in one-letter code: Protein DesVIII (402 aa).

It belongs to the cytochrome P450 family. As to quaternary structure, forms a complex with DesVII.

It participates in antibiotic biosynthesis. Its function is as follows. Involved in the biosynthesis of the macrolide antibiotics methymycin, neomethymycin, narbomycin, and pikromycin. DesVIII assists the folding of the DesVII polypeptide. However, unlike chaperones, it remains bound to DesVII during catalysis, forming a tight DesVII/DesVIII complex. Although the formation of the DesVII/DesVIII complex is essential for the catalytic activity, DesVIII is unlikely to be involved in catalysis directly. The polypeptide is Protein DesVIII (Streptomyces venezuelae).